The sequence spans 858 residues: DNA mismatch repair protein MutS (858 aa).

Residue 618 to 625 (GPNMGGKS) participates in ATP binding.

The protein belongs to the DNA mismatch repair MutS family.

In terms of biological role, this protein is involved in the repair of mismatches in DNA. It is possible that it carries out the mismatch recognition step. This protein has a weak ATPase activity. This chain is DNA mismatch repair protein MutS, found in Shewanella woodyi (strain ATCC 51908 / MS32).